The following is a 132-amino-acid chain: Small ribosomal subunit protein uS8 (132 aa).

Belongs to the universal ribosomal protein uS8 family. In terms of assembly, part of the 30S ribosomal subunit. Contacts proteins S5 and S12.

In terms of biological role, one of the primary rRNA binding proteins, it binds directly to 16S rRNA central domain where it helps coordinate assembly of the platform of the 30S subunit. The chain is Small ribosomal subunit protein uS8 from Flavobacterium psychrophilum (strain ATCC 49511 / DSM 21280 / CIP 103535 / JIP02/86).